Reading from the N-terminus, the 486-residue chain is Receptor-interacting serine/threonine-protein kinase 3 (486 aa).

Serine 2 is subject to Phosphoserine. The Protein kinase domain occupies 22–292; it reads LKKLEFVGKG…DCEPKTNEVY (271 aa). Residues 28–36 and lysine 51 contribute to the ATP site; that span reads VGKGGFGVV. Residue aspartate 143 is the Proton acceptor of the active site. Serine 165 is modified (phosphoserine). Threonine 187 carries the post-translational modification Phosphothreonine. Serine 204 carries the phosphoserine; by autocatalysis modification. Threonine 231 is subject to Phosphothreonine; by autocatalysis. Phosphoserine; by autocatalysis is present on serine 232. Threonine 257 bears the Phosphothreonine mark. Phosphoserine occurs at positions 304 and 326. Positions 312 to 333 are disordered; the sequence is QHRSSGRNLSAREPSQRGTEMD. Threonine 338 is modified (phosphothreonine). Positions 349 to 388 are disordered; that stretch reads LEEPSGPVPGKCPERQAQDTSVGPATPARTSSDPVAGTPQ. Phosphoserine occurs at positions 353, 369, and 380. The segment covering 366-381 has biased composition (polar residues); that stretch reads QDTSVGPATPARTSSD. A Phosphothreonine modification is found at threonine 392. Positions 440–461 match the RIP homotypic interaction motif (RHIM) motif; the sequence is LVFNNCSEVQIGNYNSLVAPPR. The disordered stretch occupies residues 462 to 486; that stretch reads TTASSSAKYDQAQFGRGRGWQPFHK. Arginine 477 bears the Omega-N-methylarginine mark.

This sequence belongs to the protein kinase superfamily. TKL Ser/Thr protein kinase family. In terms of assembly, interacts (via RIP homotypic interaction motif) with RIPK1 (via RIP homotypic interaction motif); this interaction induces RIPK1 phosphorylation and formation of a RIPK1-RIPK3 necrosis-inducing complex. Interacts with MLKL; the interaction is direct and triggers necroptosis. Interacts with ZBP1 (via RIP homotypic interaction motif); interaction with ZBP1 activates RIPK3, triggering necroptosis. Upon TNF-induced necrosis, the RIPK1-RIPK3 dimer further interacts with PGAM5 and MLKL; the formation of this complex leads to PGAM5 phosphorylation and increase in PGAM5 phosphatase activity. Binds TRAF2 and is recruited to the TNFR-1 signaling complex. Interacts with PYGL, GLUL and GLUD1; these interactions result in activation of these metabolic enzymes. Interacts with BIRC2/c-IAP1, BIRC3/c-IAP2 and XIAP/BIRC4. Interacts with ARHGEF2. Interacts with PELI1 (via atypical FHA domain); the phosphorylated form at Thr-187 binds preferentially to PELI1. Interacts with BUB1B, TRAF2 and STUB1. Interacts with CASP6. Component of the AIM2 PANoptosome complex, a multiprotein complex that drives inflammatory cell death (PANoptosis). As to quaternary structure, (Microbial infection) Interacts (via RIP homotypic interaction motif) with murid herpesvirus protein RIR1; this interaction disrupts RIP3-RIP1 interactions characteristic of TNF-alpha induced necroptosis, thereby suppressing this death pathway. In terms of processing, RIPK1 and RIPK3 undergo reciprocal auto- and trans-phosphorylation. Autophosphorylated following interaction with ZBP1. Phosphorylation of Ser-204 plays a role in the necroptotic function of RIPK3. Autophosphorylates at Thr-231 and Ser-232 following activation by ZBP1: phosphorylation at these sites is a hallmark of necroptosis and is required for binding MLKL. Phosphorylation at Thr-187 is important for its kinase activity, interaction with PELI1 and for its ability to mediate TNF-induced necroptosis. Post-translationally, polyubiquitinated with 'Lys-48' and 'Lys-63'-linked chains by BIRC2/c-IAP1 and BIRC3/c-IAP2, leading to activation of NF-kappa-B. Ubiquitinated by STUB1 leading to its subsequent proteasome-dependent degradation. Expressed in embryo and in adult spleen, liver, testis, heart, brain and lung.

The protein resides in the cytoplasm. The protein localises to the cytosol. Its subcellular location is the nucleus. It catalyses the reaction L-seryl-[protein] + ATP = O-phospho-L-seryl-[protein] + ADP + H(+). The enzyme catalyses L-threonyl-[protein] + ATP = O-phospho-L-threonyl-[protein] + ADP + H(+). Activity is stimulated by ZBP1, which senses double-stranded Z-RNA structures. RIPK3-dependent necroptosis is inhibited by RIPK1: RIPK1 prevents the ZBP1-induced activation of RIPK3 via FADD-mediated recruitment of CASP8, which cleaves RIPK1 and limits TNF-induced necroptosis. Inhibited by type II inhibitor 1-(4-fluorophenyl)-N-[3-fluoro-4-(1H-pyrrolo[2,3-b]pyridin-4-yloxy)phenyl]-2-oxo-1,2-dihydropyridine-3-carboxamide. Its function is as follows. Serine/threonine-protein kinase that activates necroptosis and apoptosis, two parallel forms of cell death. Necroptosis, a programmed cell death process in response to death-inducing TNF-alpha family members, is triggered by RIPK3 following activation by ZBP1. Activated RIPK3 forms a necrosis-inducing complex and mediates phosphorylation of MLKL, promoting MLKL localization to the plasma membrane and execution of programmed necrosis characterized by calcium influx and plasma membrane damage. In addition to TNF-induced necroptosis, necroptosis can also take place in the nucleus in response to orthomyxoviruses infection: following ZBP1 activation, which senses double-stranded Z-RNA structures, nuclear RIPK3 catalyzes phosphorylation and activation of MLKL, promoting disruption of the nuclear envelope and leakage of cellular DNA into the cytosol. Also regulates apoptosis: apoptosis depends on RIPK1, FADD and CASP8, and is independent of MLKL and RIPK3 kinase activity. Phosphorylates RIPK1: RIPK1 and RIPK3 undergo reciprocal auto- and trans-phosphorylation. In some cell types, also able to restrict viral replication by promoting cell death-independent responses. In response to flavivirus infection in neurons, promotes a cell death-independent pathway that restricts viral replication: together with ZBP1, promotes a death-independent transcriptional program that modifies the cellular metabolism via up-regulation expression of the enzyme ACOD1/IRG1 and production of the metabolite itaconate. Itaconate inhibits the activity of succinate dehydrogenase, generating a metabolic state in neurons that suppresses replication of viral genomes. RIPK3 binds to and enhances the activity of three metabolic enzymes: GLUL, GLUD1, and PYGL. These metabolic enzymes may eventually stimulate the tricarboxylic acid cycle and oxidative phosphorylation, which could result in enhanced ROS production. This is Receptor-interacting serine/threonine-protein kinase 3 from Mus musculus (Mouse).